Consider the following 417-residue polypeptide: NADH-quinone oxidoreductase subunit D (417 aa).

It belongs to the complex I 49 kDa subunit family. In terms of assembly, NDH-1 is composed of 14 different subunits. Subunits NuoB, C, D, E, F, and G constitute the peripheral sector of the complex.

It localises to the cell inner membrane. It carries out the reaction a quinone + NADH + 5 H(+)(in) = a quinol + NAD(+) + 4 H(+)(out). Functionally, NDH-1 shuttles electrons from NADH, via FMN and iron-sulfur (Fe-S) centers, to quinones in the respiratory chain. The immediate electron acceptor for the enzyme in this species is believed to be ubiquinone. Couples the redox reaction to proton translocation (for every two electrons transferred, four hydrogen ions are translocated across the cytoplasmic membrane), and thus conserves the redox energy in a proton gradient. In Burkholderia thailandensis (strain ATCC 700388 / DSM 13276 / CCUG 48851 / CIP 106301 / E264), this protein is NADH-quinone oxidoreductase subunit D.